The following is a 323-amino-acid chain: MYIVTGGAGFIGSAMVWKLNEMGIEDIVVVDNLSTSEKWKNLVNRRYVDYVHRDTFMDMVLHGDLPWDVDAVVHMGACSATTERDADFLMENNLRYSRMLCELCMETGARFINASSAATYGDGSLGFSDDDTTMLRLKPLNMYGYSKQLFDLWAYREGRLDGIASLKFFNVYGPNEYHKGDMRSVICKAYAQIGQEGVMRLFRSCHPDYADGGQMRDFIYVKDCVEVMWWLLQNPGVNGVFNVGTGKARTWNDLVTAVFRAMDREPVIEYIDMPEQLRGKYQSFTEATMGKLRDAGCPVRFTELEDGVTEYVRRYLAAADPHL.

NADP(+)-binding positions include 10–11, 31–32, Lys-38, Arg-53, 75–79, and Asn-92; these read FI, DN, and MGACS. Residue Tyr-143 is the Proton acceptor of the active site. Lys-147 serves as a coordination point for NADP(+). Asn-170 contributes to the substrate binding site. Residues Val-171 and Lys-179 each contribute to the NADP(+) site. Catalysis depends on Lys-179, which acts as the Proton acceptor. Substrate is bound by residues Asp-181, Lys-188, 202-205, Arg-216, and Tyr-281; that span reads FRSC.

Belongs to the NAD(P)-dependent epimerase/dehydratase family. HldD subfamily. In terms of assembly, homopentamer. The cofactor is NADP(+).

The catalysed reaction is ADP-D-glycero-beta-D-manno-heptose = ADP-L-glycero-beta-D-manno-heptose. It functions in the pathway nucleotide-sugar biosynthesis; ADP-L-glycero-beta-D-manno-heptose biosynthesis; ADP-L-glycero-beta-D-manno-heptose from D-glycero-beta-D-manno-heptose 7-phosphate: step 4/4. Functionally, catalyzes the interconversion between ADP-D-glycero-beta-D-manno-heptose and ADP-L-glycero-beta-D-manno-heptose via an epimerization at carbon 6 of the heptose. This chain is ADP-L-glycero-D-manno-heptose-6-epimerase, found in Nitratidesulfovibrio vulgaris (strain ATCC 29579 / DSM 644 / CCUG 34227 / NCIMB 8303 / VKM B-1760 / Hildenborough) (Desulfovibrio vulgaris).